The primary structure comprises 517 residues: 2-isopropylmalate synthase (517 aa).

The Pyruvate carboxyltransferase domain maps to 7–269 (VIIFDTTLRD…ETGIDTTQIV (263 aa)). Residues Asp-16, His-204, His-206, and Asn-240 each coordinate Mn(2+). Positions 395-517 (KFISQKISTE…KPKAQGSGTI (123 aa)) are regulatory domain.

The protein belongs to the alpha-IPM synthase/homocitrate synthase family. LeuA type 1 subfamily. As to quaternary structure, homodimer. The cofactor is Mn(2+).

The protein resides in the cytoplasm. It carries out the reaction 3-methyl-2-oxobutanoate + acetyl-CoA + H2O = (2S)-2-isopropylmalate + CoA + H(+). It functions in the pathway amino-acid biosynthesis; L-leucine biosynthesis; L-leucine from 3-methyl-2-oxobutanoate: step 1/4. Functionally, catalyzes the condensation of the acetyl group of acetyl-CoA with 3-methyl-2-oxobutanoate (2-ketoisovalerate) to form 3-carboxy-3-hydroxy-4-methylpentanoate (2-isopropylmalate). This Neisseria meningitidis serogroup A / serotype 4A (strain DSM 15465 / Z2491) protein is 2-isopropylmalate synthase.